The sequence spans 377 residues: E3 ubiquitin-protein ligase rififylin (377 aa).

An FYVE-type zinc finger spans residues 55 to 107 (TGSEPSCKACGVHFASTTRKQTCLDCKKNFCMTCSSQEGNGPRLCLLCLRFRA). Residues 115 to 134 (LMKMKVKDLRDYLSLHDIST) form the SAP 1 domain. Positions 176 to 249 (LTQPQTSTVP…SVDSEDSFVP (74 aa)) are disordered. Positions 190–212 (GLPSSPAQVTSVPLAQDQETQQA) are enriched in polar residues. Positions 235–245 (EDETQSVDSED) are enriched in acidic residues. Phosphoserine is present on residues Ser-240, Ser-243, Ser-246, and Ser-254. One can recognise an SAP 2 domain in the interval 264-278 (IEGLTVRQLKEILAR). Residues 330–365 (CKICMDSPIDCVLLECGHMVTCTKCGKRMNECPICR) form an RING-type zinc finger.

Interacts with CASP8 and CASP10. Interacts with RIPK1 (via protein kinase domain); involved in RIPK1 ubiquitination. Interacts with PRR5L. Interacts (via RING-type zinc finger) with p53/TP53; involved in p53/TP53 ubiquitination. Interacts (via RING-type zinc finger) with MDM2; the interaction stabilizes MDM2. Post-translationally, autoubiquitinated. In terms of processing, palmitoylated. Undergoes caspase-mediated cleavage upon death-receptor activation, by TNFSF10 for instance. May be mediated by the caspases CASP8 and CASP10 in a negative feedback loop. In terms of tissue distribution, ubiquitous. Detected in heart, brain, spleen, lung, liver, skeletal muscle, kidney, testis, thymus, whole embryo and embryonic stem cells.

It localises to the cytoplasm. The protein localises to the cytosol. It is found in the cell membrane. The protein resides in the recycling endosome membrane. It carries out the reaction S-ubiquitinyl-[E2 ubiquitin-conjugating enzyme]-L-cysteine + [acceptor protein]-L-lysine = [E2 ubiquitin-conjugating enzyme]-L-cysteine + N(6)-ubiquitinyl-[acceptor protein]-L-lysine.. It participates in protein modification; protein ubiquitination. E3 ubiquitin-protein ligase that regulates several biological processes through the ubiquitin-mediated proteasomal degradation of various target proteins. Mediates 'Lys-48'-linked polyubiquitination of PRR5L and its subsequent proteasomal degradation thereby indirectly regulating cell migration through the mTORC2 complex. Also ubiquitinates the caspases CASP8 and CASP10, promoting their proteasomal degradation, to negatively regulate apoptosis downstream of death domain receptors. Also negatively regulates the tumor necrosis factor-mediated signaling pathway through targeting of RIPK1 to ubiquitin-mediated proteasomal degradation. Negatively regulates p53/TP53 through its direct ubiquitination and targeting to proteasomal degradation. Indirectly, may also negatively regulate p53/TP53 through ubiquitination and degradation of SFN. May also play a role in endocytic recycling. The protein is E3 ubiquitin-protein ligase rififylin of Mus musculus (Mouse).